A 338-amino-acid polypeptide reads, in one-letter code: MQIWPHKHIHSLANFSIKDYESVFELANRFDALKNSGTKKIPALQGTLVTSLFFEPSTRTKNSFELAAKRLSADVQTFAPSSSSLTKGETIIDTAITYSAMGADTLVIRHSSSYITFEIAEKLDAINSKTSVLNAGDGLHSHPSQGLLDIYTLIKFFSKNTLNPGVLNSKKILIIGDVNHSRVARSNLWALSAFGADIILCGPETLIPDEFTNFLKTPAPNQIEDPVKSRGCITISRSLEESIKIADAIIVLRLQKERMMENLLSSIDSYSLDYGLTSEKLSLNNKEIPILHPGPINRDIEISSKVVDQYPNCLINNQVSNGIPIRMALLYLLQKNNQ.

Arginine 59 and threonine 60 together coordinate carbamoyl phosphate. Lysine 87 is a binding site for L-aspartate. Carbamoyl phosphate-binding residues include arginine 109, histidine 142, and glutamine 145. Arginine 182 and arginine 253 together coordinate L-aspartate. Residues glycine 294 and proline 295 each contribute to the carbamoyl phosphate site.

The protein belongs to the aspartate/ornithine carbamoyltransferase superfamily. ATCase family. Heterododecamer (2C3:3R2) of six catalytic PyrB chains organized as two trimers (C3), and six regulatory PyrI chains organized as three dimers (R2).

The catalysed reaction is carbamoyl phosphate + L-aspartate = N-carbamoyl-L-aspartate + phosphate + H(+). The protein operates within pyrimidine metabolism; UMP biosynthesis via de novo pathway; (S)-dihydroorotate from bicarbonate: step 2/3. Functionally, catalyzes the condensation of carbamoyl phosphate and aspartate to form carbamoyl aspartate and inorganic phosphate, the committed step in the de novo pyrimidine nucleotide biosynthesis pathway. The sequence is that of Aspartate carbamoyltransferase catalytic subunit from Prochlorococcus marinus (strain MIT 9301).